A 516-amino-acid chain; its full sequence is Glycosyl hydrolase family 109 protein 4 (516 aa).

The first 18 residues, 1-18 (MKKIKLLLVAGACVVLSA), serve as a signal peptide directing secretion. Cys19 carries N-palmitoyl cysteine lipidation. The S-diacylglycerol cysteine moiety is linked to residue Cys19. NAD(+) is bound by residues 76–77 (MR), Asp98, 146–149 (WLHH), 166–167 (EV), and Asn195. Substrate contacts are provided by residues Tyr224, Arg247, 259-262 (YATH), and Tyr337. Residue Tyr259 coordinates NAD(+).

Belongs to the Gfo/Idh/MocA family. Glycosyl hydrolase 109 subfamily. NAD(+) serves as cofactor.

The protein localises to the cell membrane. In terms of biological role, glycosidase. The polypeptide is Glycosyl hydrolase family 109 protein 4 (Phocaeicola vulgatus (strain ATCC 8482 / DSM 1447 / JCM 5826 / CCUG 4940 / NBRC 14291 / NCTC 11154) (Bacteroides vulgatus)).